Reading from the N-terminus, the 735-residue chain is Exocyst complex component 7 (735 aa).

Coiled-coil stretches lie at residues 5-42 and 63-85; these read QEAS…TKNM and VHKQ…SCLD. Serine 133 is modified (phosphoserine). The tract at residues 239–268 is disordered; that stretch reads HKSSSSSGVPYSPAIPNKRKDTPTKKPVKR.

It belongs to the EXO70 family. The exocyst complex is composed of EXOC1, EXOC2, EXOC3, EXOC4, EXOC5, EXOC6, EXOC7 and EXOC8. Interacts with ARHQ in a GTP-dependent manner. Interacts with RAB11FIP3. In terms of tissue distribution, abundant in the ventricular zone, the outer subventricular zone and the cortical plate of the fetal cortex.

It localises to the cytoplasm. It is found in the cytosol. Its subcellular location is the cell membrane. The protein resides in the midbody. The protein localises to the midbody ring. In terms of biological role, component of the exocyst complex involved in the docking of exocytic vesicles with fusion sites on the plasma membrane. In adipocytes, plays a crucial role in targeting SLC2A4 vesicle to the plasma membrane in response to insulin, perhaps directing the vesicle to the precise site of fusion. It is required for neuron survival and plays an essential role in cortical development. This chain is Exocyst complex component 7 (EXOC7), found in Homo sapiens (Human).